A 444-amino-acid polypeptide reads, in one-letter code: Tubulin beta chain (444 aa).

The GTP site is built by Gln-11, Glu-69, Ser-138, Gly-142, Thr-143, Gly-144, Asn-204, and Asn-226. Mg(2+) is bound at residue Glu-69. Residues 423-444 (QQYQDATAEEEGEFDDEEEMDV) form a disordered region. Residues 429-444 (TAEEEGEFDDEEEMDV) show a composition bias toward acidic residues.

It belongs to the tubulin family. Dimer of alpha and beta chains. A typical microtubule is a hollow water-filled tube with an outer diameter of 25 nm and an inner diameter of 15 nM. Alpha-beta heterodimers associate head-to-tail to form protofilaments running lengthwise along the microtubule wall with the beta-tubulin subunit facing the microtubule plus end conferring a structural polarity. Microtubules usually have 13 protofilaments but different protofilament numbers can be found in some organisms and specialized cells. Mg(2+) is required as a cofactor.

The protein resides in the cytoplasm. Its subcellular location is the cytoskeleton. In terms of biological role, tubulin is the major constituent of microtubules, a cylinder consisting of laterally associated linear protofilaments composed of alpha- and beta-tubulin heterodimers. Microtubules grow by the addition of GTP-tubulin dimers to the microtubule end, where a stabilizing cap forms. Below the cap, tubulin dimers are in GDP-bound state, owing to GTPase activity of alpha-tubulin. The protein is Tubulin beta chain of Euplotes focardii.